Here is a 418-residue protein sequence, read N- to C-terminus: AP-3 complex subunit mu-1 (418 aa).

One can recognise an MHD domain in the interval 176-417 (NNEAYFDVVE…VTKAGKFQVR (242 aa)).

The protein belongs to the adaptor complexes medium subunit family. In terms of assembly, adaptor protein complex 3 (AP-3) is a heterotetramer composed of two large adaptins (delta-type subunit AP3D1 and beta-type subunit AP3B1 or AP3B2), a medium adaptin (mu-type subunit AP3M1 or AP3M2) and a small adaptin (sigma-type subunit APS1 or AP3S2). Interacts with AGAP1. AP-3 associates with the BLOC-1 complex. As to quaternary structure, (Microbial infection) Interacts with human respiratory virus (HRSV) matrix protein; this interaction plays an essential role in trafficking the matrix protein in host cells.

It is found in the golgi apparatus. The protein resides in the cytoplasmic vesicle membrane. Functionally, part of the AP-3 complex, an adaptor-related complex which is not clathrin-associated. The complex is associated with the Golgi region as well as more peripheral structures. It facilitates the budding of vesicles from the Golgi membrane and may be directly involved in trafficking to lysosomes. In concert with the BLOC-1 complex, AP-3 is required to target cargos into vesicles assembled at cell bodies for delivery into neurites and nerve terminals. The sequence is that of AP-3 complex subunit mu-1 (AP3M1) from Homo sapiens (Human).